The sequence spans 85 residues: DNA-directed RNA polymerase subunit beta'' (85 aa).

Belongs to the RNA polymerase beta' chain family. RpoC2 subfamily. In terms of assembly, in plastids the minimal PEP RNA polymerase catalytic core is composed of four subunits: alpha, beta, beta', and beta''. When a (nuclear-encoded) sigma factor is associated with the core the holoenzyme is formed, which can initiate transcription.

The protein localises to the plastid. The protein resides in the chloroplast. The enzyme catalyses RNA(n) + a ribonucleoside 5'-triphosphate = RNA(n+1) + diphosphate. Functionally, DNA-dependent RNA polymerase catalyzes the transcription of DNA into RNA using the four ribonucleoside triphosphates as substrates. The sequence is that of DNA-directed RNA polymerase subunit beta'' (rpoC2) from Galdieria sulphuraria (Red alga).